Consider the following 770-residue polypeptide: Protein argonaute (770 aa).

The segment at 1-151 is N-terminal domain; sequence MKAKVVINLV…VIHIIHQIQS (151 aa). The 119-residue stretch at 154 to 272 folds into the PAZ domain; it reads TLWELVNKDP…LLPQLVVPTY (119 aa). The segment at 276–361 is interdomain connector; that stretch reads QLESDVAKEI…SQLLLWTNYS (86 aa). Residues 362-544 are mid domain; the sequence is RKYPVILPYE…LSKLGVKYYV (183 aa). The Piwi domain occupies 473 to 756; the sequence is GLAFIAARNK…FANAIRNEWK (284 aa). Catalysis depends on residues Asp558, Glu596, Asp628, and His745. Asp558 provides a ligand contact to Mn(2+). Positions 628, 745, and 770 each coordinate Mn(2+).

This sequence belongs to the argonaute family. Long pAgo subfamily. Monomer. The cofactor is Mn(2+).

Its activity is regulated as follows. Inhibited at greater than 500 mM NaCl. In terms of biological role, a DNA-guided ssDNA endonuclease that may play a role in defense against invading mobile genetic elements. Uses short 5'-phospho-ssDNA sequences as guides (gDNA) to bind complementary target strands, resulting in cleavage of the target DNA (tDNA). Endonucleolytically cleaves DNA in short dsDNA (the gDNA indicates where to cleave on the tDNA). Efficient guide-dependent target DNA cleavage requires a minimal gDNA length of 15 nucleotides (nt) and works up to at least 31 nt. Overexpression decreases plasmid transformation efficiency. Has no appreciable activity with gRNA or on target RNA. Also has guide-independent activity on plasmid DNA called 'chopping'. The cleavage site is 10 nucleotides (nt) downstream of the target residue base-paired with the 5'-end of the gDNA, cleavage is insensitive to adenine methylation. DNA cleavage produces 5'-phosphomonoesters (as it can be ligated by T4 DNA ligase). The sequence is that of Protein argonaute from Pyrococcus furiosus (strain ATCC 43587 / DSM 3638 / JCM 8422 / Vc1).